The primary structure comprises 239 residues: 1-(5-phosphoribosyl)-5-[(5-phosphoribosylamino)methylideneamino] imidazole-4-carboxamide isomerase (239 aa).

Residue D8 is the Proton acceptor of the active site. Catalysis depends on D129, which acts as the Proton donor.

The protein belongs to the HisA/HisF family.

It localises to the cytoplasm. It carries out the reaction 1-(5-phospho-beta-D-ribosyl)-5-[(5-phospho-beta-D-ribosylamino)methylideneamino]imidazole-4-carboxamide = 5-[(5-phospho-1-deoxy-D-ribulos-1-ylimino)methylamino]-1-(5-phospho-beta-D-ribosyl)imidazole-4-carboxamide. The protein operates within amino-acid biosynthesis; L-histidine biosynthesis; L-histidine from 5-phospho-alpha-D-ribose 1-diphosphate: step 4/9. The chain is 1-(5-phosphoribosyl)-5-[(5-phosphoribosylamino)methylideneamino] imidazole-4-carboxamide isomerase from Bacillus cereus (strain ZK / E33L).